We begin with the raw amino-acid sequence, 118 residues long: Ribonuclease P protein component (118 aa).

Belongs to the RnpA family. Consists of a catalytic RNA component (M1 or rnpB) and a protein subunit.

It catalyses the reaction Endonucleolytic cleavage of RNA, removing 5'-extranucleotides from tRNA precursor.. In terms of biological role, RNaseP catalyzes the removal of the 5'-leader sequence from pre-tRNA to produce the mature 5'-terminus. It can also cleave other RNA substrates such as 4.5S RNA. The protein component plays an auxiliary but essential role in vivo by binding to the 5'-leader sequence and broadening the substrate specificity of the ribozyme. This Shewanella putrefaciens (strain CN-32 / ATCC BAA-453) protein is Ribonuclease P protein component.